The following is a 223-amino-acid chain: Cytidylate kinase (223 aa).

17 to 25 (GPTASGKGT) provides a ligand contact to ATP.

This sequence belongs to the cytidylate kinase family. Type 1 subfamily.

The protein resides in the cytoplasm. The catalysed reaction is CMP + ATP = CDP + ADP. It carries out the reaction dCMP + ATP = dCDP + ADP. The protein is Cytidylate kinase of Bordetella pertussis (strain Tohama I / ATCC BAA-589 / NCTC 13251).